We begin with the raw amino-acid sequence, 192 residues long: Large ribosomal subunit protein bL25 (192 aa).

It belongs to the bacterial ribosomal protein bL25 family. CTC subfamily. As to quaternary structure, part of the 50S ribosomal subunit; part of the 5S rRNA/L5/L18/L25 subcomplex. Contacts the 5S rRNA. Binds to the 5S rRNA independently of L5 and L18.

Its function is as follows. This is one of the proteins that binds to the 5S RNA in the ribosome where it forms part of the central protuberance. The polypeptide is Large ribosomal subunit protein bL25 (Cytophaga hutchinsonii (strain ATCC 33406 / DSM 1761 / CIP 103989 / NBRC 15051 / NCIMB 9469 / D465)).